A 406-amino-acid chain; its full sequence is Probable endo-xylogalacturonan hydrolase A (406 aa).

A signal peptide spans 1-18 (MISLNSIFLLSLVGLSRA). Residues 20 to 49 (PSRSETSPDRTIKPRAACTPTAGGSSSTDD) form a disordered region. PbH1 repeat units follow at residues 183-213 (TSNAQFTSLTMDATSNSDNLPKNTDAFDIGA), 214-235 (STYVTISSVAITNDDDCVAFKP), 237-257 (ANYVTVENVSCTGSHGISVGS), 266-289 (VQNVYARNITMINSSKAAGIKTYP), 299-320 (VKNATFEDFIVDGCDYAFQIQS), and 368-390 (TCDVTISGFEVKAPSGDAKILCG). Asp228 serves as the catalytic Proton donor. Asn244 carries N-linked (GlcNAc...) asparagine glycosylation. His251 is an active-site residue. N-linked (GlcNAc...) asparagine glycans are attached at residues Asn273, Asn278, and Asn301.

Belongs to the glycosyl hydrolase 28 family.

It is found in the secreted. Functionally, pectinolytic enzyme involved in the degradation of xylogalacturonan (xga), a galacturonan backbone heavily substituted with xylose, and which is one important component of the hairy regions of pectin. Activity requires a galacturonic acid backbone substituted with xylose. The polypeptide is Probable endo-xylogalacturonan hydrolase A (xghA) (Aspergillus flavus (strain ATCC 200026 / FGSC A1120 / IAM 13836 / NRRL 3357 / JCM 12722 / SRRC 167)).